A 481-amino-acid polypeptide reads, in one-letter code: Serine--tRNA ligase (481 aa).

284–286 (TAE) contacts L-serine. 315 to 317 (RAE) is a binding site for ATP. Glu-338 is a binding site for L-serine. Residue 405–408 (EISS) participates in ATP binding. Position 440 (Ser-440) interacts with L-serine.

It belongs to the class-II aminoacyl-tRNA synthetase family. Type-1 seryl-tRNA synthetase subfamily. Homodimer. The tRNA molecule binds across the dimer.

The protein localises to the cytoplasm. The catalysed reaction is tRNA(Ser) + L-serine + ATP = L-seryl-tRNA(Ser) + AMP + diphosphate + H(+). The enzyme catalyses tRNA(Sec) + L-serine + ATP = L-seryl-tRNA(Sec) + AMP + diphosphate + H(+). It participates in aminoacyl-tRNA biosynthesis; selenocysteinyl-tRNA(Sec) biosynthesis; L-seryl-tRNA(Sec) from L-serine and tRNA(Sec): step 1/1. Catalyzes the attachment of serine to tRNA(Ser). Is also able to aminoacylate tRNA(Sec) with serine, to form the misacylated tRNA L-seryl-tRNA(Sec), which will be further converted into selenocysteinyl-tRNA(Sec). The protein is Serine--tRNA ligase of Rhodopseudomonas palustris (strain BisB18).